A 730-amino-acid chain; its full sequence is Denticleless protein homolog (730 aa).

Met-1 carries the N-acetylmethionine modification. 3 WD repeats span residues Gly-47–Lys-89, Ala-96–Thr-135, and Gly-138–Phe-178. The DDB1-binding motif signature appears at Trp-168–Arg-171. Residues Ala-188–Ser-198 are compositionally biased toward polar residues. A disordered region spans residues Ala-188–Ala-210. Phosphothreonine is present on Thr-196. A Nuclear localization signal motif is present at residues Pro-197 to Lys-203. WD repeat units follow at residues Asp-214–Arg-253, Ser-267–Val-308, Gly-313–Thr-354, and Gly-358–Pro-398. Positions Trp-243 to Arg-246 match the DDB1-binding motif motif. The disordered stretch occupies residues Gly-399–Ser-443. Ser-410 and Ser-426 each carry phosphoserine. Thr-464 is subject to Phosphothreonine; by CDK1 and CDK2. Residues Pro-465–Lys-498 form a disordered region. Phosphoserine occurs at positions 485, 490, 495, and 512. Thr-516 is modified (phosphothreonine). Ser-557 is subject to Phosphoserine. Disordered stretches follow at residues Ser-599–Glu-631 and Gly-644–Pro-703. Phosphoserine occurs at positions 676 and 679. Residues Ser-679–Arg-689 are compositionally biased toward polar residues. A phosphothreonine mark is found at Thr-684 and Thr-702. Ser-717 carries the phosphoserine modification.

The protein belongs to the WD repeat cdt2 family. In terms of assembly, component of the DCX(DTL) E3 ubiquitin ligase complex (also called CRL4(CDT2)), at least composed of CUL4 (CUL4A or CUL4B), DDB1, DTL/CDT2 and RBX1. Interacts with CDKN1A. Interacts with DDB1. Interacts with FBXO11; SCF(FBXWO11) controls DTL stability but DCX(DTL) does not control FBXO11 stability. Interacts with CRY1. In terms of processing, ubiquitinated by the anaphase promoting complex/cyclosome (APC/C). Autoubiquitinated through 'Lys-48'-polyubiquitin chains in a PCNA-independent reaction, allowing proteasomal turnover. Polyubiquitinated by SCF(FBXO11) when not phosphorylated, leading to its degradation. A tight regulation of the polyubiquitination by SCF(FBXO11) is involved in the control of different processes such as TGF-beta signaling, cell cycle progression and exit. Phosphorylated at Thr-464 by CDK1/Cyclin-B and CDK2/Cyclin-A but not by CDK2/Cyclin-E, MAPK1 or PLK1. Phosphorylation at Thr-464 inhibits the interaction with FBXO11 and decreases upon cell cycle exit induced by TGF-beta or serum starvation. As to expression, expressed in placenta and testis, very low expression seen in skeletal muscle. Detected in all hematopoietic tissues examined, with highest expression in thymus and bone marrow. A low level detected in the spleen and lymph node, and barely detectable level in the peripheral leukocytes. RA treatment down-regulated the expression in NT2 cell.

The protein resides in the nucleus. It is found in the nucleus membrane. Its subcellular location is the cytoplasm. The protein localises to the cytoskeleton. It localises to the microtubule organizing center. The protein resides in the centrosome. It is found in the chromosome. The protein operates within protein modification; protein ubiquitination. Substrate-specific adapter of a DCX (DDB1-CUL4-X-box) E3 ubiquitin-protein ligase complex required for cell cycle control, DNA damage response and translesion DNA synthesis. The DCX(DTL) complex, also named CRL4(CDT2) complex, mediates the polyubiquitination and subsequent degradation of CDT1, CDKN1A/p21(CIP1), FBH1, KMT5A and SDE2. CDT1 degradation in response to DNA damage is necessary to ensure proper cell cycle regulation of DNA replication. CDKN1A/p21(CIP1) degradation during S phase or following UV irradiation is essential to control replication licensing. KMT5A degradation is also important for a proper regulation of mechanisms such as TGF-beta signaling, cell cycle progression, DNA repair and cell migration. Most substrates require their interaction with PCNA for their polyubiquitination: substrates interact with PCNA via their PIP-box, and those containing the 'K+4' motif in the PIP box, recruit the DCX(DTL) complex, leading to their degradation. In undamaged proliferating cells, the DCX(DTL) complex also promotes the 'Lys-164' monoubiquitination of PCNA, thereby being involved in PCNA-dependent translesion DNA synthesis. The DDB1-CUL4A-DTL E3 ligase complex regulates the circadian clock function by mediating the ubiquitination and degradation of CRY1. The sequence is that of Denticleless protein homolog (DTL) from Homo sapiens (Human).